A 122-amino-acid polypeptide reads, in one-letter code: Large ribosomal subunit protein uL14 (122 aa).

It belongs to the universal ribosomal protein uL14 family. In terms of assembly, part of the 50S ribosomal subunit. Forms a cluster with proteins L3 and L19. In the 70S ribosome, L14 and L19 interact and together make contacts with the 16S rRNA in bridges B5 and B8.

Its function is as follows. Binds to 23S rRNA. Forms part of two intersubunit bridges in the 70S ribosome. In Mycolicibacterium gilvum (strain PYR-GCK) (Mycobacterium gilvum (strain PYR-GCK)), this protein is Large ribosomal subunit protein uL14.